The sequence spans 427 residues: Histidine--tRNA ligase (427 aa).

Belongs to the class-II aminoacyl-tRNA synthetase family. In terms of assembly, homodimer.

The protein localises to the cytoplasm. The catalysed reaction is tRNA(His) + L-histidine + ATP = L-histidyl-tRNA(His) + AMP + diphosphate + H(+). This is Histidine--tRNA ligase from Alteromonas mediterranea (strain DSM 17117 / CIP 110805 / LMG 28347 / Deep ecotype).